We begin with the raw amino-acid sequence, 313 residues long: D-alanine--D-alanine ligase (313 aa).

Positions 108–308 (KLVWQQTGVP…YSELVVKVLS (201 aa)) constitute an ATP-grasp domain. 138–193 (VAKLGLPLFVKPASEGSSVAVLKVKTADALPAALAEAATHDKIVIVEKSIEGGGEY) serves as a coordination point for ATP. The Mg(2+) site is built by Asp262, Glu275, and Asn277.

Belongs to the D-alanine--D-alanine ligase family. It depends on Mg(2+) as a cofactor. Mn(2+) serves as cofactor.

It is found in the cytoplasm. The catalysed reaction is 2 D-alanine + ATP = D-alanyl-D-alanine + ADP + phosphate + H(+). It participates in cell wall biogenesis; peptidoglycan biosynthesis. Its function is as follows. Cell wall formation. The polypeptide is D-alanine--D-alanine ligase (Burkholderia orbicola (strain MC0-3)).